The sequence spans 224 residues: Inhibitor of apoptosis protein (224 aa).

Residues 29–92 (VDARNQSFAI…GFWSRNCGFM (64 aa)) form a BIR repeat. Residues cysteine 62, cysteine 65, histidine 82, and cysteine 89 each coordinate Zn(2+). Residues 189–207 (CMTCGIEPIKKDENFCNAC) form a C4-type zinc finger.

This sequence belongs to the asfivirus IAP family. In terms of assembly, interacts with subunit p17 of host CASP3.

The protein resides in the host cytoplasm. Its subcellular location is the virion. Its function is as follows. Prevent apoptosis of host cell by inhibiting caspase-3/CASP3 activation to promote the viral replication. Also induces the activation of host NF-kappaB. The chain is Inhibitor of apoptosis protein from Ornithodoros (relapsing fever ticks).